Consider the following 127-residue polypeptide: Calcitonin receptor-stimulating peptide 2 (127 aa).

The first 25 residues, 1–25 (MGFWKLSPFLAIGLLVMYQAGILQA), serve as a signal peptide directing secretion. A propeptide spanning residues 26–81 (APFRSALENPLESATLTEDEICVLLTAVVKDYVQMKARELQQEQETEGSSLTAQKS) is cleaved from the precursor. The segment at 65–85 (LQQEQETEGSSLTAQKSSCKD) is disordered. Over residues 72–81 (EGSSLTAQKS) the composition is skewed to polar residues. The cysteines at positions 83 and 88 are disulfide-linked.

The protein belongs to the calcitonin family.

It localises to the secreted. In Canis lupus familiaris (Dog), this protein is Calcitonin receptor-stimulating peptide 2 (CRSP2).